The chain runs to 179 residues: Putative undecaprenyl-phosphate N-acetylgalactosaminyl 1-phosphate transferase (179 aa).

A helical membrane pass occupies residues 39–59 (IWFALIGLAIALPMIAVFSIL).

Belongs to the bacterial sugar transferase family.

The protein localises to the cell membrane. The enzyme catalyses di-trans,octa-cis-undecaprenyl phosphate + UDP-N-acetyl-alpha-D-galactosamine = N-acetyl-alpha-D-galactosaminyl-di-trans,octa-cis-undecaprenyl diphosphate + UMP. It participates in cell wall biogenesis; teichuronic acid biosynthesis. In terms of biological role, might mediate the very first reaction in teichuronic synthesis, i.e. the formation of lipid-linked N-acetylglucosamine. The polypeptide is Putative undecaprenyl-phosphate N-acetylgalactosaminyl 1-phosphate transferase (tuaA) (Bacillus subtilis (strain 168)).